The primary structure comprises 556 residues: Sesquiterpene synthase 2 (556 aa).

4 residues coordinate Mg(2+): Asp309, Asp313, Asp453, and Glu461. The short motif at 309–313 (DDIYD) is the DDXXD motif element.

The protein belongs to the terpene synthase family. Tpsa subfamily. Mg(2+) is required as a cofactor. It depends on Mn(2+) as a cofactor. As to expression, mostly expressed in roots and mature leaflets and, to a lower extent, in rachis and developing leaflets.

The enzyme catalyses (2E,6E)-farnesyl diphosphate = alpha-humulene + diphosphate. It carries out the reaction (2E,6E)-farnesyl diphosphate = alpha-selinene + diphosphate. It catalyses the reaction (2E,6E)-farnesyl diphosphate = delta-cadinene + diphosphate. The catalysed reaction is (2E,6E)-farnesyl diphosphate = (1S,2S,4R)-beta-elemene + diphosphate. The protein operates within secondary metabolite biosynthesis; terpenoid biosynthesis. Functionally, sesquiterpene synthase involved in the biosynthesis of volatile compounds known for their medicinal efficacy for treating enteritis, dysentery, itch and some cancers. Mediates the conversion of (2E,6E)-farnesyl diphosphate (FPP) into beta-elemene, alpha-humulene, delta-cadinene and alpha-selinene. This Toona sinensis (Chinese mahogany) protein is Sesquiterpene synthase 2.